A 114-amino-acid chain; its full sequence is Iron-sulfur cluster insertion protein ErpA (114 aa).

Positions 42, 106, and 108 each coordinate iron-sulfur cluster.

The protein belongs to the HesB/IscA family. As to quaternary structure, homodimer. Iron-sulfur cluster serves as cofactor.

In terms of biological role, required for insertion of 4Fe-4S clusters for at least IspG. The polypeptide is Iron-sulfur cluster insertion protein ErpA (Klebsiella pneumoniae (strain 342)).